A 742-amino-acid chain; its full sequence is MEEGFRDRAAFIRGAKDIAKEVKKHAAKKVVKGLDRVQDEYSRRSYSRFEEEDDDDDFPAPADGYYRGEGAQDEEEGGASSDATEGHDEDDEIYEGEYQGIPRAESGGKGERMADGAPLAGVRGGLSDGEGPPGGRGEAQRRKDREELAQQYETILRECGHGRFQWTLYFVLGLALMADGVEVFVVGFVLPSAEKDMCLSDSNKGMLGLIVYLGMMVGAFLWGGLADRLGRRQCLLISLSVNSVFAFFSSFVQGYGTFLFCRLLSGVGIGGSIPIVFSYFSEFLAQEKRGEHLSWLCMFWMIGGVYAAAMAWAIIPHYGWSFQMGSAYQFHSWRVFVLVCAFPSVFAIGALTTQPESPRFFLENGKHDEAWMVLKQVHDTNMRAKGHPERVFSVTHIKTIHQEDELIEIQSDTGTWYQRWGVRALSLGGQVWGNFLSCFSPEYRRITLMMMGVWFTMSFSYYGLTVWFPDMIRHLQAVDYAARTKVFPGERVEHVTFNFTLENQIHRGGQYFNDKFIGLRLKSVSFEDSLFEECYFEDVTSSNTFFRNCTFINTVFYNTDLFEYKFVNSRLVNSTFLHNKEGCPLDVTGTGEGAYMVYFVSFLGTLAVLPGNIVSALLMDKIGRLRMLAGSSVLSCVSCFFLSFGNSESAMIALLCLFGGVSIASWNALDVLTVELYPSDKRTTAFGFLNALCKLAAVLGISIFTSFVGITKAAPILFASAALALGSSLALKLPETRGQVLQ.

Positions 1–57 (MEEGFRDRAAFIRGAKDIAKEVKKHAAKKVVKGLDRVQDEYSRRSYSRFEEEDDDDD) are interaction with SYT1. The Cytoplasmic portion of the chain corresponds to 1-169 (MEEGFRDRAA…GHGRFQWTLY (169 aa)). Basic and acidic residues predominate over residues 40–49 (EYSRRSYSRF). Residues 40 to 145 (EYSRRSYSRF…RGEAQRRKDR (106 aa)) are disordered. Residues Ser80 and Ser81 each carry the phosphoserine modification. Phosphothreonine is present on Thr84. Over residues 122–137 (VRGGLSDGEGPPGGRG) the composition is skewed to gly residues. Ser127 bears the Phosphoserine mark. A helical membrane pass occupies residues 170-190 (FVLGLALMADGVEVFVVGFVL). Over 191 to 205 (PSAEKDMCLSDSNKG) the chain is Extracellular. Residues 206–226 (MLGLIVYLGMMVGAFLWGGLA) form a helical membrane-spanning segment. The Cytoplasmic segment spans residues 227 to 233 (DRLGRRQ). A helical transmembrane segment spans residues 234–254 (CLLISLSVNSVFAFFSSFVQG). Over 255–262 (YGTFLFCR) the chain is Extracellular. The chain crosses the membrane as a helical span at residues 263 to 283 (LLSGVGIGGSIPIVFSYFSEF). The Cytoplasmic portion of the chain corresponds to 284–294 (LAQEKRGEHLS). A helical membrane pass occupies residues 295–315 (WLCMFWMIGGVYAAAMAWAII). At 316–334 (PHYGWSFQMGSAYQFHSWR) the chain is on the extracellular side. Residues 335 to 355 (VFVLVCAFPSVFAIGALTTQP) traverse the membrane as a helical segment. At 356–447 (ESPRFFLENG…CFSPEYRRIT (92 aa)) the chain is on the cytoplasmic side. Phosphoserine is present on Ser393. The chain crosses the membrane as a helical span at residues 448 to 468 (LMMMGVWFTMSFSYYGLTVWF). Topologically, residues 469 to 598 (PDMIRHLQAV…GTGEGAYMVY (130 aa)) are extracellular. Tyr480 carries the phosphotyrosine modification. Residues Asn498, Asn548, and Asn573 are each glycosylated (N-linked (GlcNAc...) asparagine). Residues 599–619 (FVSFLGTLAVLPGNIVSALLM) traverse the membrane as a helical segment. Topologically, residues 620 to 626 (DKIGRLR) are cytoplasmic. A helical transmembrane segment spans residues 627–647 (MLAGSSVLSCVSCFFLSFGNS). Residues 648–651 (ESAM) lie on the Extracellular side of the membrane. The helical transmembrane segment at 652–672 (IALLCLFGGVSIASWNALDVL) threads the bilayer. Over 673-685 (TVELYPSDKRTTA) the chain is Cytoplasmic. A helical transmembrane segment spans residues 686–708 (FGFLNALCKLAAVLGISIFTSFV). At 709-712 (GITK) the chain is on the extracellular side. Residues 713–731 (AAPILFASAALALGSSLAL) traverse the membrane as a helical segment. Over 732-742 (KLPETRGQVLQ) the chain is Cytoplasmic.

This sequence belongs to the major facilitator superfamily. Interacts with SYT1/synaptotagmin-1 in a calcium-dependent manner. Binds the adapter protein complex AP-2. As to quaternary structure, (Microbial infection) Interacts with C.botulinum neurotoxin type A (BoNT/A, botA). In terms of processing, phosphorylation by CK1 of the N-terminal cytoplasmic domain regulates interaction with SYT1. N-glycosylated. In terms of tissue distribution, expressed in conventional synapses and cone ribbon synapses in the retina (at protein level). Expressed in diaphragm motor nerve terminals (at protein level). Expressed in hippocampus neurons (at protein level).

The protein localises to the presynapse. Its subcellular location is the cytoplasmic vesicle. It localises to the secretory vesicle. The protein resides in the synaptic vesicle membrane. In terms of biological role, plays a role in the control of regulated secretion in neural and endocrine cells, enhancing selectively low-frequency neurotransmission. Positively regulates vesicle fusion by maintaining the readily releasable pool of secretory vesicles. (Microbial infection) Receptor for C.botulinum neurotoxin type A (BoNT/A, botA); the toxin probably binds via extracellular loop 4. Functionally, (Microbial infection) Possible receptor for C.botulinum neurotoxin type D (BoNT/D, botD); BoNT/D does not bind to extracellular loop 4 as do BoNT/A and BoNT/E. Its function is as follows. (Microbial infection) Receptor for C.botulinum neurotoxin type E (BoNT/E); the toxin probably binds via extracellular loop 4. It probably requires glycosylation of Asn-573. The sequence is that of Synaptic vesicle glycoprotein 2A (Sv2a) from Mus musculus (Mouse).